Here is a 376-residue protein sequence, read N- to C-terminus: Putative F-box protein At1g53370 (376 aa).

The F-box domain maps to 22 to 71; sequence RNYIDSIPVDLLIDILSRFPPKSIARFYCVSKLWESILRGPDFTELYLTK.

This is Putative F-box protein At1g53370 from Arabidopsis thaliana (Mouse-ear cress).